Consider the following 406-residue polypeptide: Phosphopentomutase (406 aa).

Aspartate 10, aspartate 305, histidine 310, aspartate 346, histidine 347, and histidine 358 together coordinate Mn(2+).

It belongs to the phosphopentomutase family. Mn(2+) serves as cofactor.

Its subcellular location is the cytoplasm. It catalyses the reaction 2-deoxy-alpha-D-ribose 1-phosphate = 2-deoxy-D-ribose 5-phosphate. It carries out the reaction alpha-D-ribose 1-phosphate = D-ribose 5-phosphate. It participates in carbohydrate degradation; 2-deoxy-D-ribose 1-phosphate degradation; D-glyceraldehyde 3-phosphate and acetaldehyde from 2-deoxy-alpha-D-ribose 1-phosphate: step 1/2. Its function is as follows. Isomerase that catalyzes the conversion of deoxy-ribose 1-phosphate (dRib-1-P) and ribose 1-phosphate (Rib-1-P) to deoxy-ribose 5-phosphate (dRib-5-P) and ribose 5-phosphate (Rib-5-P), respectively. This chain is Phosphopentomutase, found in Vibrio parahaemolyticus serotype O3:K6 (strain RIMD 2210633).